The sequence spans 279 residues: MATH domain and coiled-coil domain-containing protein At1g31390 (279 aa).

Residues 6–134 (EKKITWTIKN…NGDVKIVVEV (129 aa)) enclose the MATH domain. A coiled-coil region spans residues 235-271 (KLDWLEKKLKEVCEARVQEIDEEWKDLTDLKENWSSD).

In Arabidopsis thaliana (Mouse-ear cress), this protein is MATH domain and coiled-coil domain-containing protein At1g31390.